Reading from the N-terminus, the 741-residue chain is MNAPDKTGTDRRAVPAAVDLDALIRAEHRDPFSILGPHDDGKGGQYVRAYLPAALSVRLLARDDGRELAELHMSDVPGFFVGHLEQPQPYLLKINWAGGEQITEDPYSYGPLLGEMDLYLFAEGNHRDLSSCLGAQVTSVDGVEGVRFAVWAPNARRVSVVGSFNGWDGRRHPMRLRHPTGVWEIFVPRLQPGEVYKYEILGAHGILPLKSDPMALATTLPPDTASKISAPLKFEWHDQDWLQSRAGRHDVAAPLSIYELHAGSWQMEQNDEGQWRQYNWRELADRLIPYVKELGFTHIELMPIMEHPFGGSWGYQLLAQFAPTARYGSPEDFAAFVDACHQAEIGVILDWVPAHFPTDTHGLAQFDGTALYEYADPKEGFHQDWDTLIYNLGRTEVHGFMLASALHWLKHYHIDGLRVDAVASMLYRDYSRKAGEWVPNRFGGRENLEAIDFLRHLNDVVALEAPGTMVIAEESTAWPGVSESTQKGGLGFNYKWNMGWMHDSLQYMEEDPINREHHHGKLSFSLVYAWSERFVLPISHDEVVHGKHSLIDKMPGDRWQKFANLRAYLAFMWTHPGKKLLFMGCEFGQWREWNHDEQLDWYLMQYAEHVGVKKLVGDLNRIYREEKALHQRDADPTGFQWLIGDDKSNSVFAYLRWSNDGEPLLVVANMTPVPREGYRVGVPLQGAWTELLNSDAETYAGSNIGNGGEVISEDEPVHGMSASLTLNLPPLAVLIFKPKKG.

Aspartate 420 (nucleophile) is an active-site residue. Glutamate 473 functions as the Proton donor in the catalytic mechanism.

The protein belongs to the glycosyl hydrolase 13 family. GlgB subfamily. Monomer.

The catalysed reaction is Transfers a segment of a (1-&gt;4)-alpha-D-glucan chain to a primary hydroxy group in a similar glucan chain.. The protein operates within glycan biosynthesis; glycogen biosynthesis. Functionally, catalyzes the formation of the alpha-1,6-glucosidic linkages in glycogen by scission of a 1,4-alpha-linked oligosaccharide from growing alpha-1,4-glucan chains and the subsequent attachment of the oligosaccharide to the alpha-1,6 position. This is 1,4-alpha-glucan branching enzyme GlgB from Pseudomonas syringae pv. tomato (strain ATCC BAA-871 / DC3000).